The chain runs to 250 residues: Membrane-spanning 4-domains subfamily A member 8 (250 aa).

The Cytoplasmic segment spans residues 1-74 (MNSMTSAVPV…ALKEGKTLGA (74 aa)). A helical transmembrane segment spans residues 75 to 95 (IQIIIGLAHIGLGSIMATVLV). Residues 96-98 (GEY) are Extracellular-facing. A helical transmembrane segment spans residues 99–119 (LSISFYGGFPFWGGLWFIISG). Topologically, residues 120–136 (SLSVAAENQPYSYCLLS) are cytoplasmic. The chain crosses the membrane as a helical span at residues 137–157 (GSLGLNIVSAICSAVGVILFI). Over 158-180 (TDLSIPHPYAYPDYYPYAWGVNP) the chain is Extracellular. A helical membrane pass occupies residues 181–201 (GMAISGVLLVFCLLEFGIACA). Over 202 to 250 (SSHFGCQLVCCQSSNVSVIYPNIYAANPVITPEPVTSPPSYSSEIQANK) the chain is Cytoplasmic.

The protein belongs to the MS4A family. As to expression, expressed by hematopoietic tissues and cells lines.

Its subcellular location is the membrane. Its function is as follows. May be involved in signal transduction as a component of a multimeric receptor complex. In Homo sapiens (Human), this protein is Membrane-spanning 4-domains subfamily A member 8 (MS4A8).